The following is a 231-amino-acid chain: Phosphoglycolate phosphatase (231 aa).

Aspartate 9 functions as the Nucleophile in the catalytic mechanism. The Mg(2+) site is built by aspartate 9 and aspartate 11. Aspartate 11 serves as the catalytic Proton donor. Lysine 154 is a binding site for substrate. Mg(2+)-binding residues include aspartate 177 and aspartate 181.

Belongs to the archaeal SPP-like hydrolase family. Homodimer. It depends on Mg(2+) as a cofactor.

The catalysed reaction is 2-phosphoglycolate + H2O = glycolate + phosphate. Functionally, catalyzes the dephosphorylation of 2-phosphoglycolate. Has phosphatase activity towards p-nitrophenylphosphate (in vitro). This is Phosphoglycolate phosphatase from Pyrococcus horikoshii (strain ATCC 700860 / DSM 12428 / JCM 9974 / NBRC 100139 / OT-3).